Consider the following 461-residue polypeptide: Ribosomal protein uS12 methylthiotransferase RimO (461 aa).

One can recognise an MTTase N-terminal domain in the interval 13–128 (PKVGFVSLGC…VMQHVHMHLP (116 aa)). 6 residues coordinate [4Fe-4S] cluster: C22, C58, C87, C159, C163, and C166. Positions 145–390 (LTPRHYAYLK…MEVAEEVSAK (246 aa)) constitute a Radical SAM core domain. Residues 393–461 (AKKVGKTLKV…ADGHDLWGEV (69 aa)) enclose the TRAM domain.

It belongs to the methylthiotransferase family. RimO subfamily. It depends on [4Fe-4S] cluster as a cofactor.

Its subcellular location is the cytoplasm. The catalysed reaction is L-aspartate(89)-[ribosomal protein uS12]-hydrogen + (sulfur carrier)-SH + AH2 + 2 S-adenosyl-L-methionine = 3-methylsulfanyl-L-aspartate(89)-[ribosomal protein uS12]-hydrogen + (sulfur carrier)-H + 5'-deoxyadenosine + L-methionine + A + S-adenosyl-L-homocysteine + 2 H(+). Functionally, catalyzes the methylthiolation of an aspartic acid residue of ribosomal protein uS12. The chain is Ribosomal protein uS12 methylthiotransferase RimO from Paraburkholderia xenovorans (strain LB400).